The chain runs to 183 residues: Large ribosomal subunit protein eL18 (183 aa).

The tract at residues 150–183 is disordered; it reads RHFGPAPGAPRSHTKPYVRTKGHERARPRRRSNV. Residues 161–183 show a composition bias toward basic residues; sequence SHTKPYVRTKGHERARPRRRSNV.

This sequence belongs to the eukaryotic ribosomal protein eL18 family.

Its subcellular location is the cytoplasm. This chain is Large ribosomal subunit protein eL18 (RpL18), found in Spodoptera frugiperda (Fall armyworm).